Consider the following 1183-residue polypeptide: MKILLSKQQTRKIAIVSETHGLVFRPINSKNSRRSTCAVELVPKAELNGNGFRRLSNHEIYGFIGLIEIEGLMFIATITGKSKVAQPIPNKTVNKIYAVDFFCLNNSKWDFMDIDSSGYPIVTNDGDFAISSPPSISTHSSRSSLRSSSSRSLNAQEQAPKHPCHELRKLLSNGSFYYSTDFDLTCTLQKRGFTEHSLSFDDFDREFMWNSFLMDEIITYRDRLDVTAKELLDQRGFLTTVIRGFAETIFSYINRLKVGLTIISRQSWKRAGTRFNARGIDDDGHVANFVETEMIMYSSQYCYAFTQIRGSLPIFWEQDTSLISPKIQITRSVEATQPTFDEHFIRLFKKYGPVHIINLLSTKSSEIQLSRRYKEQLKNSEKMKIGRDVFLTSFDFHRETSQDGFAAASRIIPKIRNTILDAGYFSYDVKEGRLISEQDGVFRTNCLDCLDRTNLIQQTISLAVFKLFLEDFRLVKPSSFIDDNEFVQKVNALWADNGDQISQIYTGTNALKSSYSRKGKMSFSGALSDATKSVSRMYINNFVDKGKQQNIDTLLGKLPHQQVVELYDPICEYVNERLLESEEKFTTHSNINLFVGTFNVNGNSRRADLSKWLFPIGDKFKPDVVVLGLQEVIELTAGSILNADYTKSSFWETMVTDCLNQYEEKYLLLRVEQMSSLLILFFARSDRAYNIKEVGGSTKKTGFGGITGNKGAVAIRFDYGATSFCFVNTHLSAGASNIDERRNDYNNIYRNITFPRSKTIPHHDSLFWLGDLNYRITLTNDEVRRELRAQKDGYIDRLLQYDQLTQEINEGVVFQGFKEPTLQFRPTYKYDYGTDNYDTSEKARTPSWTDRIIYKGENLHPLAYSDAPLKISDHKPVYAAYRANVKFVDEKEKLNLVEKLYAEYKNTHPEALTTGPDELSHARMEKQKESIPLDATVQSAGIKLIDLDDTSSCVSPLLSGPSPQPSVVGPGGLSNVSPDKSKLNVLPPPPPTSRHNKEPSSKLLSPTKEISIVSVSPRKGESNLPALERHSTPKPLPPVPALSLSKPVSLQKSSSELQHAKETIDNGKIVPRPCPPIRRKSSTAPDEISTSTKNSGVSTTEDPEPAKASTKPEKPPVVKKPHYLSVAANKLNTSQEHSIKVSPSNSKSEEELPCKKKSKPKVPAKNPELEKLSVHPLKPCDPN.

A compositionally biased stretch (low complexity) spans 133–153 (PPSISTHSSRSSLRSSSSRSL). Residues 133–161 (PPSISTHSSRSSLRSSSSRSLNAQEQAPK) are disordered. Ser152 bears the Phosphoserine mark. The SAC domain maps to 167–507 (LRKLLSNGSF…GDQISQIYTG (341 aa)). Ser522 bears the Phosphoserine mark. The span at 955-968 (SPLLSGPSPQPSVV) shows a compositional bias: low complexity. The interval 955-1183 (SPLLSGPSPQ…VHPLKPCDPN (229 aa)) is disordered. Ser1005 and Ser1016 each carry phosphoserine. At Thr1032 the chain carries Phosphothreonine. Composition is skewed to polar residues over residues 1046–1057 (KPVSLQKSSSEL), 1082–1100 (STAPDEISTSTKNSGVSTT), and 1130–1145 (KLNTSQEHSIKVSPSN). Ser1095 is modified (phosphoserine).

This sequence belongs to the synaptojanin family. It in the central section; belongs to the inositol 1,4,5-trisphosphate 5-phosphatase family. Interacts (via SAC domain) with BSP1; the interaction is direct. Interacts with ABP1.

It localises to the cytoplasm. The protein localises to the cytoskeleton. The protein resides in the actin patch. The catalysed reaction is a 1,2-diacyl-sn-glycero-3-phospho-(1D-myo-inositol-4,5-bisphosphate) + H2O = a 1,2-diacyl-sn-glycero-3-phospho-(1D-myo-inositol 4-phosphate) + phosphate. In terms of biological role, dephosphorylates a number of phosphatidylinositols (PIs) like phosphatidylinositol 4,5-bisphosphate (PtdIns(4,5)P2), but also phosphatidylinositol 3-phosphate (PtdIns(3)P), phosphatidylinositol 4-phosphate (PtdIns(4)P), and phosphatidylinositol 3,5-bisphosphate (PtdIns(3,5)P2). Controls the cellular levels and subcellular distribution of phosphatidylinositol 3-phosphate and phosphatidylinositol 4,5-bisphosphate. Specifically functions within the early endocytic pathway and actin organization. The protein is Polyphosphatidylinositol phosphatase INP52 of Saccharomyces cerevisiae (strain ATCC 204508 / S288c) (Baker's yeast).